The chain runs to 1187 residues: Myelin transcription factor 1-like protein (1187 aa).

The segment at 1–22 (MDVDSEEKRHRTRSKGVRVPVE) is disordered. The CCHHC-type 1 zinc-finger motif lies at 22-65 (EPAIQELFSCPTPGCDGSGHVSGKYARHRSVYGCPLAKKRKTQD). 4 residues coordinate Zn(2+): Cys31, Cys36, His49, and Cys55. 2 disordered regions span residues 56-178 (PLAK…QMSC) and 221-248 (RTES…GRKS). The segment covering 89–172 (ECYESDGTED…EEEEEEEENE (84 aa)) has biased composition (acidic residues). Ser251 carries the phosphoserine modification. 2 disordered regions span residues 343 to 422 (SETN…DRSE) and 450 to 514 (REKM…GCDG). Polar residues predominate over residues 344 to 358 (ETNPQDRSQPPNMSV). 4 stretches are compositionally biased toward basic and acidic residues: residues 362 to 377 (VRQE…DRSY), 401 to 412 (AKEDGCHERDDD), 450 to 488 (REKM…DSHV), and 496 to 506 (DPSRTEKRESK). 2 consecutive CCHHC-type zinc fingers follow at residues 498–541 (SRTE…PPEI) and 542–585 (LAMH…KLAK). 8 residues coordinate Zn(2+): Cys507, Cys512, His525, Cys531, Cys551, Cys556, His569, and Cys575. The tract at residues 686–710 (ASPSSSTTSSYAPSSSSNLSCGGGS) is disordered. 3 consecutive CCHHC-type zinc fingers follow at residues 897-940 (LATS…GIRI), 946-989 (DKED…QKDG), and 999-1042 (KSVK…MKKA). Residues Cys906, Cys911, His924, Cys930, Cys955, Cys960, His973, Cys979, Cys1008, Cys1013, His1026, and Cys1032 each coordinate Zn(2+). A coiled-coil region spans residues 1058–1132 (NGIENDEEIK…ANLSQSLIHS (75 aa)).

Belongs to the MYT1 family. As to quaternary structure, interacts with SIN3B. Brain.

It is found in the nucleus. Its subcellular location is the chromosome. In terms of biological role, transcription factor that plays a key role in neuronal differentiation by specifically repressing expression of non-neuronal genes during neuron differentiation. In contrast to other transcription repressors that inhibit specific lineages, mediates repression of multiple differentiation programs. Also represses expression of negative regulators of neurogenesis, such as members of the Notch signaling pathway, including HES1. The combination of three transcription factors, ASCL1, POU3F2/BRN2 and MYT1L, is sufficient to reprogram fibroblasts and other somatic cells into induced neuronal (iN) cells in vitro. Directly binds the 5'-AAGTT-3' core motif present on the promoter of target genes and represses transcription by recruiting a multiprotein complex containing SIN3B. The 5'-AAGTT-3' core motif is absent from the promoter of neural genes. This chain is Myelin transcription factor 1-like protein, found in Mus musculus (Mouse).